Here is a 1383-residue protein sequence, read N- to C-terminus: NPC intracellular cholesterol transporter 1 homolog 1 (1383 aa).

The signal sequence occupies residues 1–20 (MKQLLIFCLLFGSIFHHGDA). 8 disulfides stabilise this stretch: C22–C76, C28–C39, C65–C111, C77–C115, C99–C246, C102–C167, C182–C187, and C235–C251. N42 carries N-linked (GlcNAc...) asparagine glycosylation. N231 is a glycosylation site (N-linked (GlcNAc...) asparagine). A run of 2 helical transmembrane segments spans residues 282–302 (IFVM…GFVF) and 353–373 (PKSH…GMIY). N447 carries an N-linked (GlcNAc...) asparagine glycan. Cystine bridges form between C464-C474 and C526-C541. N-linked (GlcNAc...) asparagine glycosylation occurs at N558. The next 6 helical transmembrane spans lie at 627–647 (EIVT…FSLG), 665–685 (ICLG…SWGI), 697–717 (ALVV…FMVV), 746–766 (TMPA…IGGF), 780–800 (GLAV…LFVW), and 856–876 (IITG…SSKI). An SSD domain is found at 627–800 (EIVTVVIALA…CTIFLALFVW (174 aa)). 4 disulfides stabilise this stretch: C929/C934, C976/C1046, C977/C1005, and C988/C1002. N-linked (GlcNAc...) asparagine glycans are attached at residues N993 and N1082. Transmembrane regions (helical) follow at residues 1126–1146 (IMPI…GIIC), 1157–1177 (ACAV…MYIF), 1179–1199 (IPVN…LIEF), 1226–1246 (IGPI…MFLS), and 1260–1280 (LFLI…PILL).

It belongs to the patched family.

It localises to the membrane. It carries out the reaction cholesterol(in) = cholesterol(out). Functionally, involved in the uptake or utilization of cholesterol. Ncr-1 and ncr-2 act redundantly to prevent dauer larva formation under favorable growth conditions, and are required for the normal functioning of ADF, ASI and ASG neurons. This Caenorhabditis elegans protein is NPC intracellular cholesterol transporter 1 homolog 1.